The sequence spans 714 residues: Calpain-1 catalytic subunit (714 aa).

In terms of domain architecture, Calpain catalytic spans 55–354; the sequence is LFRDEAFPPV…FTRLEICNLT (300 aa). 2 residues coordinate Ca(2+): Gln-109 and Asp-114. Residues Cys-115, His-272, and Asn-296 contribute to the active site. 3 residues coordinate Ca(2+): Asn-316, Asp-318, and Asp-323. Thr-354 carries the phosphothreonine modification. Residues 355-526 form a domain III region; it reads PDALKSRTIR…KSAGTAELDD (172 aa). Positions 527-542 are linker; that stretch reads QIQANLPDEQVLSEEE. EF-hand domains are found at residues 541 to 576, 585 to 618, 615 to 650, and 680 to 714; these read EEID…IISK, FSLE…NRIR, NRIR…AGFK, and VRLE…TMFA. Positions 543–713 are domain IV; the sequence is IDENFKALFR…LFKWLQLTMF (171 aa). Ca(2+)-binding residues include Asp-598, Asp-600, Asn-602, Lys-604, Glu-609, Asp-628, Asp-630, Ser-632, Ser-634, and Glu-639.

This sequence belongs to the peptidase C2 family. As to quaternary structure, forms a heterodimer with a small (regulatory) subunit CAPNS1. It depends on Ca(2+) as a cofactor. In terms of processing, undergoes calcium-induced successive autoproteolytic cleavages that generate a membrane-bound 78 kDa active form and an intracellular 75 kDa active form. Calpastatin reduces with high efficiency the transition from 78 kDa to 75 kDa calpain forms.

Its subcellular location is the cytoplasm. The protein localises to the cell membrane. The catalysed reaction is Broad endopeptidase specificity.. Activated by micromolar concentrations of calcium and inhibited by calpastatin. In terms of biological role, calcium-regulated non-lysosomal thiol-protease which catalyzes limited proteolysis of substrates involved in cytoskeletal remodeling and signal transduction. Proteolytically cleaves CTBP1. Cleaves and activates caspase-7 (CASP7). This Pongo abelii (Sumatran orangutan) protein is Calpain-1 catalytic subunit.